A 472-amino-acid polypeptide reads, in one-letter code: FAD-linked oxidoreductase azaL (472 aa).

The signal sequence occupies residues 1 to 18 (MFRTILLCSLGLTTLSSA). N-linked (GlcNAc...) asparagine glycans are attached at residues Asn-22, Asn-44, Asn-102, Asn-123, Asn-227, Asn-246, Asn-273, Asn-305, Asn-318, Asn-390, and Asn-415. Positions 54–228 (TTYDAPTYIG…TSATYKIYNA (175 aa)) constitute an FAD-binding PCMH-type domain.

Belongs to the oxygen-dependent FAD-linked oxidoreductase family.

Its pathway is secondary metabolite biosynthesis. In terms of biological role, FAD-linked oxidoreductase; part of the gene cluster that mediates the biosynthesis of azaphilones, a class of fungal metabolites characterized by a highly oxygenated pyrano-quinone bicyclic core and exhibiting a broad range of bioactivities. In the first step, the non-reducing polyketide synthase azaA forms the hexaketide precursor from successive condensations of five malonyl-CoA units, presumably with a simple acetyl-CoA starter unit. The reactive polyketide chain then undergoes a PT-mediated C2-C7 cyclization to afford the aromatic ring and is eventually released as an aldehyde through the R-domain. The putative ketoreductase azaE is proposed to catalyze the reduction of the terminal ketone resulting in the early culture product FK17-P2a. The monooxygenase azaH was demonstrated to be the only enzyme required to convert FK17-P2a to azanigerone E. AzaH first hydroxylates the benzaldehyde intermediate FK17-P2a at C4, which triggers the formation of the pyran-ring to afford azanigerone E. In parallel, the 2,4-dimethylhexanoyl chain is synthesized by the HR-PKS azaB and is proposed to be transferred to the C4-hydroxyl of azanigerone E by the acyltransferase azaD directly from the ACP domain of azaB. Alternatively, the 2,4-dimethyl-hexanoyl chain may be offloaded from the HR-PKS as a carboxylic acid and converted to an acyl-CoA by azaF. The resulting acyl-CoA molecule could then be taken up as a substrate by AzaD to form azanigerone B. To yield the carboxylic acid substituent in azanigerone A, the hydroxypropyl side chain of azanigerone B would need to undergo a C-C oxidative cleavage catalyzed by cytochrome P450 AzaI. AzaI is proposed to act on a vicinal diol that leads to a C-C bond scission either through an alkoxyradical intermediate or a peroxy complex. In the biosynthesis of azanigerone A, azanigerone B first undergoes hydroxylation at C10, possibly catalyzed by one of the two FAD-dependent monooxygenases encoded in the cluster, azaG or azaL, resulting in the vicinal diol azanigerone C. Oxidative cleavage of azanigerone C by azaI would yield the corresponding aldehyde derivative of azanigerone A. Finally, the dehydrogenase azaJ is proposed to convert the aldehyde functional group into the carboxylic acid, completing the conversion from azanigerone B to azanigerone A. Alternatively, the oxidation of aldehyde to carboxylic acid may be catalyzed by the same P450 enzyme azaI via consecutive oxidation or by endogenous alcohol dehydrogenase. The sequence is that of FAD-linked oxidoreductase azaL from Aspergillus niger (strain ATCC 1015 / CBS 113.46 / FGSC A1144 / LSHB Ac4 / NCTC 3858a / NRRL 328 / USDA 3528.7).